Consider the following 218-residue polypeptide: Glutathione S-transferase PM239X14 (218 aa).

The 84-residue stretch at 2-85 (VTVKLYGMAY…YLVAKYGKGS (84 aa)) folds into the GST N-terminal domain. Residues 12-13 (ST), 41-42 (HK), 55-56 (VI), and 69-70 (ES) contribute to the glutathione site. The 126-residue stretch at 93–218 (DPKAYGLFEQ…LLRNSSKEFM (126 aa)) folds into the GST C-terminal domain.

It belongs to the GST superfamily. Phi family. As to expression, expressed in vegetative rosettes.

The protein localises to the cytoplasm. Its subcellular location is the cytosol. The enzyme catalyses RX + glutathione = an S-substituted glutathione + a halide anion + H(+). In terms of biological role, specifically catalyzes the conjugation of synthetic 1-chloro-2,4-ditrobenzene to GSH. Also functions as a glutathione peroxidase, converting linoleate oxidation products into their corresponding hydroxyacids. This enzyme may thus serve to protect the cell from oxygen toxicity as well as from exogenous toxins such as herbicides. The chain is Glutathione S-transferase PM239X14 from Arabidopsis thaliana (Mouse-ear cress).